The primary structure comprises 405 residues: Phosphoglycerate kinase (405 aa).

Residues 24–26 (DFN), R40, 63–66 (HLGR), R122, and R162 each bind substrate. ATP-binding positions include K212, E331, and 361–364 (GGDS).

The protein belongs to the phosphoglycerate kinase family. Monomer.

Its subcellular location is the cytoplasm. The enzyme catalyses (2R)-3-phosphoglycerate + ATP = (2R)-3-phospho-glyceroyl phosphate + ADP. The protein operates within carbohydrate degradation; glycolysis; pyruvate from D-glyceraldehyde 3-phosphate: step 2/5. The polypeptide is Phosphoglycerate kinase (Corynebacterium aurimucosum (strain ATCC 700975 / DSM 44827 / CIP 107346 / CN-1) (Corynebacterium nigricans)).